Reading from the N-terminus, the 2276-residue chain is Protein Ycf2 (2276 aa).

1621-1628 (GSIGTGRS) lines the ATP pocket.

It belongs to the Ycf2 family.

Its subcellular location is the plastid. The protein localises to the chloroplast stroma. Probable ATPase of unknown function. Its presence in a non-photosynthetic plant (Epifagus virginiana) and experiments in tobacco indicate that it has an essential function which is probably not related to photosynthesis. The polypeptide is Protein Ycf2 (Guizotia abyssinica (Niger)).